Reading from the N-terminus, the 313-residue chain is Secretory carrier-associated membrane protein 4 (313 aa).

The segment at 1-69 (MAGRSRYDNP…LPPEPADFYN (69 aa)) is disordered. At 1 to 148 (MAGRSRYDNP…EIPVHLQRTQ (148 aa)) the chain is on the cytoplasmic side. Residues 85 to 116 (MKTREKELLAKEAELNRREKEIKRREEAAARA) are a coiled coil. The next 4 helical transmembrane spans lie at 149–169 (YVAF…IICV), 181–201 (IWFL…YLWY), 216–236 (FGWF…AAVS), and 255–275 (LIGN…MFCL). Residues 276–313 (ESLLSMWVIQRVYLYFRGSGKEAEMKREAARSAARAAF) are Cytoplasmic-facing.

Belongs to the SCAMP family.

Its subcellular location is the cell membrane. The protein localises to the cytoplasmic vesicle. The protein resides in the secretory vesicle membrane. Its function is as follows. Probably involved in membrane trafficking. The protein is Secretory carrier-associated membrane protein 4 (SCAMP4) of Oryza sativa subsp. japonica (Rice).